The chain runs to 538 residues: RRRRSQGSEVNLTGQGQPCHSCGERCPGFLAHRWRKICQHCQCPWEEHGHTASNQDLERSLCRLVSGSQRDSLCESSSDSSVEKYAWVPSGLNPVQVHQFFKCFPEKKIPFINSPGEKYRLKQLLHQLPPHDSEARYCCSLQGEEEEELLLLFSQKRRLENLGRGCVRPVSGTMSGTVCQQCGHQISVGDVAVFASRAGLGFCWHPQCFTCAQCLELLCDLIYFYQDGKVYCGRHHAELKRPRCLACDEVIFSLECTEAEGFHWHTRHFCCFECECPLGGQRYIMKDQRPFCCSCYERLYAQYCDSCGECIGIDEGQLTYGGQHWHASESCFRCGRCGVCLLGRPFLPRHGQIYCSRSCSVLNATPESSFSPSQTDLSFQKETKDVGTSTNHELDGDSINDCTLSGSRRSLSIIDQTPISRAAPIRSLHSSLRGAPKEFSRECPNRRSLPDLNSHTRTPTRVTFQLPLSSEVKESVSLSHPSFTSSSSSDEEEGYFLGEPIPLPPFLRPPGYSAPPTHAPTSTTKKKKKKKDKSCLLS.

Residues 66 to 175 enclose the PET domain; the sequence is SGSQRDSLCE…CVRPVSGTMS (110 aa). 3 LIM zinc-binding domains span residues 177-241, 242-302, and 305-366; these read TVCQ…ELKR, PRCL…LYAQ, and DSCG…NATP. Residues 369 to 378 show a composition bias toward polar residues; the sequence is SFSPSQTDLS. Disordered stretches follow at residues 369–398, 433–463, and 475–538; these read SFSPSQTDLSFQKETKDVGTSTNHELDGDS, RGAPKEFSRECPNRRSLPDLNSHTRTPTRVT, and SVSL…CLLS. Residues 435-449 show a composition bias toward basic and acidic residues; that stretch reads APKEFSRECPNRRSL. The span at 451–463 shows a compositional bias: polar residues; the sequence is DLNSHTRTPTRVT. Composition is skewed to low complexity over residues 475–488 and 514–523; these read SVSLSHPSFTSSSS and APPTHAPTST.

It belongs to the prickle / espinas / testin family. In terms of assembly, interacts with vangl2 via its C-terminus. The vangl2-dependent membrane recruitment of prickle3 is a prerequisite for its polarization. Interacts with wtip. Wtip is involved in the recruitment of prickle3 to the basal body. In terms of tissue distribution, predominantly expressed in the epidermal ectoderm.

Its subcellular location is the cytoplasm. The protein resides in the cell membrane. The protein localises to the mitochondrion. Functionally, involved in the planar cell polarity (PCP) pathway that is essential for the polarization of epithelial cells during morphogenetic processes, including gastrulation and neurulation. PCP is maintained by two molecular modules, the global and the core modules. Proteins of the core module include the proteins Frizzled (Fz), Disheveled (Dsh), Van Gogh (Vang), Prickle (Pk), Flamingo (Fmi, Celsr) and Diego (Dgo). The core module proteins develop subcellular asymmetry, accumulating in two groups on opposite sides of epithelial cells. Distinct proximal (Vang, Pk and Fmi) and distal (Fz, Dsh, Dgo and Fmi) complexes segregate to opposite sides of the cell, where they interact with the opposite complex in the neighboring cell at or near the adherents junctions. Directional information to orient polarization with respect to the tissue axes is provided by the global module which involves Wnt proteins. Involved in the organization of the basal body. Involved in cilia growth and positioning. Required for proper assembly, stability, and function of mitochondrial membrane ATP synthase (mitochondrial complex V). The protein is Prickle planar cell polarity protein 3-A (prickle3-a) of Xenopus laevis (African clawed frog).